Consider the following 201-residue polypeptide: Recombination protein RecR (201 aa).

The segment at 60 to 75 (CATCGNFDTVQPCAVC) adopts a C4-type zinc-finger fold. In terms of domain architecture, Toprim spans 83-178 (GIICVVEDVP…DVTRLAHGVP (96 aa)).

The protein belongs to the RecR family.

Its function is as follows. May play a role in DNA repair. It seems to be involved in an RecBC-independent recombinational process of DNA repair. It may act with RecF and RecO. The chain is Recombination protein RecR from Hyphomonas neptunium (strain ATCC 15444).